The primary structure comprises 151 residues: 3-dehydroquinate dehydratase 1 (151 aa).

Tyrosine 23 (proton acceptor) is an active-site residue. Residues asparagine 75, histidine 81, and aspartate 88 each coordinate substrate. Histidine 101 serves as the catalytic Proton donor. Residues leucine 102–serine 103 and arginine 112 each bind substrate.

Belongs to the type-II 3-dehydroquinase family. As to quaternary structure, homododecamer.

The catalysed reaction is 3-dehydroquinate = 3-dehydroshikimate + H2O. It participates in metabolic intermediate biosynthesis; chorismate biosynthesis; chorismate from D-erythrose 4-phosphate and phosphoenolpyruvate: step 3/7. Catalyzes a trans-dehydration via an enolate intermediate. The protein is 3-dehydroquinate dehydratase 1 (aroQ1) of Pseudomonas putida (strain ATCC 47054 / DSM 6125 / CFBP 8728 / NCIMB 11950 / KT2440).